Here is a 606-residue protein sequence, read N- to C-terminus: DNA mismatch repair protein MutL (606 aa).

Residues 340 to 366 (MNAFRPGYSPSGLRPSPSATWSAATSP) are disordered. The segment covering 353–366 (RPSPSATWSAATSP) has biased composition (low complexity).

The protein belongs to the DNA mismatch repair MutL/HexB family.

This protein is involved in the repair of mismatches in DNA. It is required for dam-dependent methyl-directed DNA mismatch repair. May act as a 'molecular matchmaker', a protein that promotes the formation of a stable complex between two or more DNA-binding proteins in an ATP-dependent manner without itself being part of a final effector complex. This Agrobacterium fabrum (strain C58 / ATCC 33970) (Agrobacterium tumefaciens (strain C58)) protein is DNA mismatch repair protein MutL.